Consider the following 114-residue polypeptide: Anti-adapter protein IraM (114 aa).

The protein belongs to the IraM/RssC family.

The protein localises to the cytoplasm. Involved in the stabilization of the sigma stress factor RpoS. This Citrobacter koseri (strain ATCC BAA-895 / CDC 4225-83 / SGSC4696) protein is Anti-adapter protein IraM.